Consider the following 507-residue polypeptide: Histidine ammonia-lyase (507 aa).

A cross-link (5-imidazolinone (Ala-Gly)) is located at residues 141 to 143; the sequence is ASG. Residue Ser-142 is modified to 2,3-didehydroalanine (Ser).

The protein belongs to the PAL/histidase family. In terms of processing, contains an active site 4-methylidene-imidazol-5-one (MIO), which is formed autocatalytically by cyclization and dehydration of residues Ala-Ser-Gly.

Its subcellular location is the cytoplasm. It catalyses the reaction L-histidine = trans-urocanate + NH4(+). The protein operates within amino-acid degradation; L-histidine degradation into L-glutamate; N-formimidoyl-L-glutamate from L-histidine: step 1/3. The sequence is that of Histidine ammonia-lyase from Burkholderia pseudomallei (strain 668).